A 312-amino-acid chain; its full sequence is Magnesium protoporphyrin IX methyltransferase, chloroplastic (312 aa).

The N-terminal 39 residues, 1 to 39, are a transit peptide targeting the chloroplast; that stretch reads MPFAPSLLSSSSSVSQFLPRFPNATRFNVTPRSRAATVV.

It belongs to the class I-like SAM-binding methyltransferase superfamily. Magnesium protoporphyrin O-methyltransferase family.

The protein localises to the plastid. The protein resides in the chloroplast membrane. It is found in the chloroplast thylakoid membrane. The catalysed reaction is Mg-protoporphyrin IX + S-adenosyl-L-methionine = Mg-protoporphyrin IX 13-monomethyl ester + S-adenosyl-L-homocysteine. It participates in porphyrin-containing compound metabolism; chlorophyll biosynthesis. Its activity is regulated as follows. Regulated by the folate status via an increased concentration of S-adenosyl-homocysteine (AdoHcy), a potent inhibitor of most AdoMet-dependent methyltransferases. Converts Mg-protoporphyrin IX to Mg-protoporphyrin IX methylester using S-adenosyl-L-methionine as a cofactor. Involved in chloroplast-to-nucleus signaling by acting as a negative effector of nuclear photosynthetic gene expression. The chain is Magnesium protoporphyrin IX methyltransferase, chloroplastic (CHLM) from Arabidopsis thaliana (Mouse-ear cress).